The primary structure comprises 301 residues: Sulfate adenylyltransferase subunit 2 (301 aa).

The protein belongs to the PAPS reductase family. CysD subfamily. Heterodimer composed of CysD, the smaller subunit, and CysN.

The catalysed reaction is sulfate + ATP + H(+) = adenosine 5'-phosphosulfate + diphosphate. Its pathway is sulfur metabolism; hydrogen sulfide biosynthesis; sulfite from sulfate: step 1/3. In terms of biological role, with CysN forms the ATP sulfurylase (ATPS) that catalyzes the adenylation of sulfate producing adenosine 5'-phosphosulfate (APS) and diphosphate, the first enzymatic step in sulfur assimilation pathway. APS synthesis involves the formation of a high-energy phosphoric-sulfuric acid anhydride bond driven by GTP hydrolysis by CysN coupled to ATP hydrolysis by CysD. The polypeptide is Sulfate adenylyltransferase subunit 2 (Shewanella woodyi (strain ATCC 51908 / MS32)).